Consider the following 246-residue polypeptide: MNARLTGLGLNLLSFAVGIGGWYLLTATGAVVLPGPVDVLERAVTLLLNGQLVGDIFASLRRVLSGFVLGVALAIPVGFLMGWYRIARSLIEPWVQFFRMIPPLAVIPLAIVTLGIDESPKIFVIFLASFLSSVVATYQGVISVDRTLINAARVLGAKDATIFARVIVPASVPFILVGVRIGLGSAWATVVAAELIAAQSGLGYRMQQAQLYYDLPTIFVSLVTIGILGLFMDRLLQAADRRLTQW.

A run of 6 helical transmembrane segments spans residues 12 to 32 (LLSFAVGIGGWYLLTATGAVV), 63 to 83 (VLSGFVLGVALAIPVGFLMGW), 94 to 114 (WVQFFRMIPPLAVIPLAIVTL), 122 to 142 (IFVIFLASFLSSVVATYQGVI), 172 to 192 (VPFILVGVRIGLGSAWATVVA), and 211 to 231 (LYYDLPTIFVSLVTIGILGLF). Residues 56–236 (IFASLRRVLS…ILGLFMDRLL (181 aa)) enclose the ABC transmembrane type-1 domain.

It belongs to the binding-protein-dependent transport system permease family. In terms of assembly, the complex is composed of two ATP-binding proteins (BMEII0108), two transmembrane proteins (BMEII0107) and a solute-binding protein (BMEII0109).

Its subcellular location is the cell inner membrane. Its function is as follows. Probably part of an ABC transporter complex. Probably responsible for the translocation of the substrate across the membrane. In Brucella melitensis biotype 1 (strain ATCC 23456 / CCUG 17765 / NCTC 10094 / 16M), this protein is Probable ABC transporter permease protein BMEII0107.